The sequence spans 329 residues: GTP 3',8-cyclase (329 aa).

A Radical SAM core domain is found at V8–A234. A GTP-binding site is contributed by R17. Positions 24 and 28 each coordinate [4Fe-4S] cluster. S-adenosyl-L-methionine is bound at residue Y30. A [4Fe-4S] cluster-binding site is contributed by C31. R68 provides a ligand contact to GTP. G72 is a binding site for S-adenosyl-L-methionine. Residue T99 participates in GTP binding. Position 123 (S123) interacts with S-adenosyl-L-methionine. Position 160 (K160) interacts with GTP. M194 contacts S-adenosyl-L-methionine. [4Fe-4S] cluster is bound by residues C257 and C260. R262–R264 is a binding site for GTP. C274 provides a ligand contact to [4Fe-4S] cluster.

This sequence belongs to the radical SAM superfamily. MoaA family. As to quaternary structure, monomer and homodimer. [4Fe-4S] cluster serves as cofactor.

It carries out the reaction GTP + AH2 + S-adenosyl-L-methionine = (8S)-3',8-cyclo-7,8-dihydroguanosine 5'-triphosphate + 5'-deoxyadenosine + L-methionine + A + H(+). The protein operates within cofactor biosynthesis; molybdopterin biosynthesis. Functionally, catalyzes the cyclization of GTP to (8S)-3',8-cyclo-7,8-dihydroguanosine 5'-triphosphate. This is GTP 3',8-cyclase from Shigella flexneri.